We begin with the raw amino-acid sequence, 281 residues long: Pre T-cell antigen receptor alpha (281 aa).

The first 23 residues, 1 to 23 (MAGTWLLLLLALGCPALPTGVGG), serve as a signal peptide directing secretion. At 24 to 146 (TPFPSLAPPI…QEPLRGTPGG (123 aa)) the chain is on the extracellular side. C47 and C107 are disulfide-bonded. N-linked (GlcNAc...) asparagine glycosylation occurs at N67. The helical transmembrane segment at 147 to 167 (ALWLGVLRLLLFKLLLFDLLL) threads the bilayer. Residues 168–281 (TCSCLCDPAG…LPPPLQAGAA (114 aa)) are Cytoplasmic-facing. Positions 196–233 (LHPATETGGREATSSPRPQPRDRRWGDTPPGRKPGSPV) are disordered.

As to quaternary structure, heterodimer with TCRB; disulfide linked. This heterodimer assembles with CD3 proteins into a signaling-competent pre-T-cell receptor complex. Interacts with RHBDD1. Expressed in immature but not mature T-cells. Also found in CD34+ cells from peripheral blood, CD34+ precursors from umbilical cord blood and adult bone marrow.

Its subcellular location is the membrane. It localises to the cell membrane. In terms of biological role, component of the pre-T-cell receptor complex (composed of PTCRA, TCRB and the CD3 complex) that has a crucial role in early T-cell development, particularly alpha-beta T cell differentiation. The sequence is that of Pre T-cell antigen receptor alpha from Homo sapiens (Human).